The primary structure comprises 455 residues: Ribulose bisphosphate carboxylase large chain (455 aa).

At K5 the chain carries N6,N6,N6-trimethyllysine. Substrate-binding residues include N114 and T164. Catalysis depends on K166, which acts as the Proton acceptor. K168 contributes to the substrate binding site. Mg(2+) contacts are provided by K192, D194, and E195. N6-carboxylysine is present on K192. H285 acts as the Proton acceptor in catalysis. Residues R286, H318, and S370 each coordinate substrate.

This sequence belongs to the RuBisCO large chain family. Type I subfamily. Heterohexadecamer of 8 large chains and 8 small chains; disulfide-linked. The disulfide link is formed within the large subunit homodimers. Requires Mg(2+) as cofactor. Post-translationally, the disulfide bond which can form in the large chain dimeric partners within the hexadecamer appears to be associated with oxidative stress and protein turnover.

The protein localises to the plastid. It is found in the chloroplast. The catalysed reaction is 2 (2R)-3-phosphoglycerate + 2 H(+) = D-ribulose 1,5-bisphosphate + CO2 + H2O. It carries out the reaction D-ribulose 1,5-bisphosphate + O2 = 2-phosphoglycolate + (2R)-3-phosphoglycerate + 2 H(+). Its function is as follows. RuBisCO catalyzes two reactions: the carboxylation of D-ribulose 1,5-bisphosphate, the primary event in carbon dioxide fixation, as well as the oxidative fragmentation of the pentose substrate in the photorespiration process. Both reactions occur simultaneously and in competition at the same active site. This chain is Ribulose bisphosphate carboxylase large chain, found in Lupinus microcarpus (Chick lupine).